We begin with the raw amino-acid sequence, 1533 residues long: Glycogen debranching enzyme (1533 aa).

Position 64 is a phosphoserine (S64). Active-site residues include D527, H530, and D628.

The protein belongs to the glycogen debranching enzyme family. Monomer. Interacts with NHLRC1/malin. Ubiquitinated.

It localises to the cytoplasm. It catalyses the reaction Transfers a segment of a (1-&gt;4)-alpha-D-glucan to a new position in an acceptor, which may be glucose or a (1-&gt;4)-alpha-D-glucan.. The catalysed reaction is Hydrolysis of (1-&gt;6)-alpha-D-glucosidic branch linkages in glycogen phosphorylase limit dextrin.. Its function is as follows. Multifunctional enzyme acting as 1,4-alpha-D-glucan:1,4-alpha-D-glucan 4-alpha-D-glycosyltransferase and amylo-1,6-glucosidase in glycogen degradation. The sequence is that of Glycogen debranching enzyme (AGL) from Canis lupus familiaris (Dog).